The primary structure comprises 150 residues: UPF0178 protein Bpet3884 (150 aa).

It belongs to the UPF0178 family.

This is UPF0178 protein Bpet3884 from Bordetella petrii (strain ATCC BAA-461 / DSM 12804 / CCUG 43448).